The chain runs to 369 residues: Ferredoxin--NADP reductase, chloroplastic (369 aa).

A chloroplast-targeting transit peptide spans 1-55; sequence MTTAVTAAVSFPSTKTTSLSARSSSVISPDKISYKKVPLYYRNVSATGKMGPIRA. An FAD-binding FR-type domain is found at 90–212; the sequence is KTPYVGRCLL…TGPVGKEMLM (123 aa). Residues 148 to 151, 169 to 171, Tyr-175, 186 to 188, and Thr-227 each bind FAD; these read RLYS, CVK, and VCS. Ser-151 and Lys-171 together coordinate NADP(+). Residues Thr-227, 259-260, 289-290, 299-301, 328-329, and Glu-367 each bind NADP(+); these read VP, SR, KMY, and GL.

Belongs to the ferredoxin--NADP reductase type 1 family. Requires FAD as cofactor.

It localises to the plastid. The protein localises to the chloroplast stroma. It is found in the chloroplast thylakoid membrane. The enzyme catalyses 2 reduced [2Fe-2S]-[ferredoxin] + NADP(+) + H(+) = 2 oxidized [2Fe-2S]-[ferredoxin] + NADPH. The protein operates within energy metabolism; photosynthesis. Its function is as follows. May play a key role in regulating the relative amounts of cyclic and non-cyclic electron flow to meet the demands of the plant for ATP and reducing power. This chain is Ferredoxin--NADP reductase, chloroplastic (PETH), found in Spinacia oleracea (Spinach).